The chain runs to 26 residues: uncharacterized protein (26 aa).

It is found in the plastid. The protein localises to the chloroplast. This is an uncharacterized protein from Trieres chinensis (Marine centric diatom).